The chain runs to 226 residues: MDLDADFLLLHLSDSALPTGAFAHSFGFETYMDAERITNAEEFQDWLKVLLKVQLTSSDALAMRMFYATPTASELKRLDERLFAGTPAREVREANARMGTRMAEIVAETYSVPLIIEYLELIKNRELSGHPALALALATHSMGIDVDRAIHAHLTATVSSLIQNAVRGIPLGQMAGQRVMFAMREHIGAAVKRSAMLDAIDFCSGDPGLDISQMVHETQRARLFMS.

The protein belongs to the UreF family. UreD, UreF and UreG form a complex that acts as a GTP-hydrolysis-dependent molecular chaperone, activating the urease apoprotein by helping to assemble the nickel containing metallocenter of UreC. The UreE protein probably delivers the nickel.

The protein resides in the cytoplasm. Its function is as follows. Required for maturation of urease via the functional incorporation of the urease nickel metallocenter. The chain is Urease accessory protein UreF from Corynebacterium glutamicum (strain R).